The sequence spans 385 residues: Galactokinase (385 aa).

34 to 37 (EHTD) lines the substrate pocket. 124 to 130 (SSGLSSS) contributes to the ATP binding site. Residues Ser-130 and Glu-162 each contribute to the Mg(2+) site. Asp-174 functions as the Proton acceptor in the catalytic mechanism. Tyr-223 contributes to the substrate binding site.

This sequence belongs to the GHMP kinase family. GalK subfamily.

Its subcellular location is the cytoplasm. The enzyme catalyses alpha-D-galactose + ATP = alpha-D-galactose 1-phosphate + ADP + H(+). It participates in carbohydrate metabolism; galactose metabolism. Its function is as follows. Catalyzes the transfer of the gamma-phosphate of ATP to D-galactose to form alpha-D-galactose-1-phosphate (Gal-1-P). The sequence is that of Galactokinase from Actinobacillus succinogenes (strain ATCC 55618 / DSM 22257 / CCUG 43843 / 130Z).